We begin with the raw amino-acid sequence, 133 residues long: Small ribosomal subunit protein uS19 (133 aa).

Belongs to the universal ribosomal protein uS19 family.

Functionally, protein S19 forms a complex with S13 that binds strongly to the 16S ribosomal RNA. In Archaeoglobus fulgidus (strain ATCC 49558 / DSM 4304 / JCM 9628 / NBRC 100126 / VC-16), this protein is Small ribosomal subunit protein uS19 (rps19).